A 233-amino-acid chain; its full sequence is MSKQTRPHRNFYGRLKGKSLKAAQKRYLDEDLAALSPGAVGWEENPDRRPLDLPGLFEGKPVWLEIGFGGGEHLVHQAAQNPDIGIIGAEPYINGVAMLLGKIRRAGVENLAVHAGDARDLMDVLPAASIDRAFLLYPDPWPKARHHRRRFVTAEHLDPLARALKPGSVFRVATDIEDYVRQTLQEVPKHGFKWLANAPQDWRRPWPDWISTRYEQKALREGRTPHYLTFVRE.

Positions 65, 90, 117, and 139 each coordinate S-adenosyl-L-methionine. Asp-139 is a catalytic residue. Residues Lys-143, Asp-175, and 212 to 215 (TRYE) each bind substrate.

Belongs to the class I-like SAM-binding methyltransferase superfamily. TrmB family.

The catalysed reaction is guanosine(46) in tRNA + S-adenosyl-L-methionine = N(7)-methylguanosine(46) in tRNA + S-adenosyl-L-homocysteine. Its pathway is tRNA modification; N(7)-methylguanine-tRNA biosynthesis. Functionally, catalyzes the formation of N(7)-methylguanine at position 46 (m7G46) in tRNA. This is tRNA (guanine-N(7)-)-methyltransferase from Roseobacter denitrificans (strain ATCC 33942 / OCh 114) (Erythrobacter sp. (strain OCh 114)).